The chain runs to 1466 residues: Adhesion G protein-coupled receptor L1 (1466 aa).

Positions Met-1–Ala-28 are cleaved as a signal peptide. The Extracellular portion of the chain corresponds to Gly-29–Leu-852. An SUEL-type lectin domain is found at Ala-40 to Val-129. 5 cysteine pairs are disulfide-bonded: Cys-41/Cys-71, Cys-50/Cys-128, Cys-83/Cys-115, Cys-96/Cys-102, and Cys-135/Cys-317. Residue Glu-42 participates in alpha-L-rhamnose binding. The N-linked (GlcNAc...) asparagine glycan is linked to Asn-98. Gly-117–Lys-120 provides a ligand contact to alpha-L-rhamnose. Positions Val-134–Pro-393 constitute an Olfactomedin-like domain. The disordered stretch occupies residues Asp-395–Pro-463. Positions Pro-400–Thr-436 are enriched in low complexity. A compositionally biased stretch (pro residues) spans Asp-448–Pro-463. 2 cysteine pairs are disulfide-bonded: Cys-475-Cys-510 and Cys-498-Cys-527. Asn-526, Asn-635, Asn-736, Asn-795, Asn-800, and Asn-821 each carry an N-linked (GlcNAc...) asparagine glycan. The GAIN-B domain occupies Pro-664–Tyr-845. 2 disulfide bridges follow: Cys-796-Cys-827 and Cys-815-Cys-829. The interval Cys-796–Tyr-845 is GPS. Residues Leu-853–Ile-873 form a helical membrane-spanning segment. Over Ser-874–Asn-887 the chain is Cytoplasmic. Residues Thr-888–Ile-908 form a helical membrane-spanning segment. The Extracellular portion of the chain corresponds to Asp-909–Glu-914. Residues Val-915–Leu-935 traverse the membrane as a helical segment. Topologically, residues Cys-936 to Lys-958 are cytoplasmic. Residues Tyr-959–Asp-979 traverse the membrane as a helical segment. The Extracellular portion of the chain corresponds to Tyr-980–Tyr-996. Residues Phe-997–Met-1017 form a helical membrane-spanning segment. Over Val-1018–Ala-1044 the chain is Cytoplasmic. The chain crosses the membrane as a helical span at residues Leu-1045 to Ile-1065. At Asn-1066–Ser-1069 the chain is on the extracellular side. A helical membrane pass occupies residues Val-1070–Phe-1090. The Cytoplasmic segment spans residues His-1091–Leu-1466. Arg-1188 is subject to Omega-N-methylarginine. The residue at position 1214 (Ser-1214) is a Phosphoserine. Disordered regions lie at residues Phe-1242–Asn-1267, Arg-1288–Ser-1319, Glu-1352–Pro-1421, and Tyr-1443–Leu-1466. Residues Gly-1296–Pro-1307 are compositionally biased toward pro residues. Ser-1319 is subject to Phosphoserine. Residues Ala-1400–Pro-1412 are compositionally biased toward pro residues. Ser-1448 and Ser-1465 each carry phosphoserine.

This sequence belongs to the G-protein coupled receptor 2 family. Adhesion G-protein coupled receptor (ADGR) subfamily. As to quaternary structure, forms a heterodimer, consisting of a large extracellular region (p120) non-covalently linked to a seven-transmembrane moiety (p85). Interacts with syntaxin and with proteins of the SHANK family via the PDZ domain. Interacts (via extracellular domain) with FLRT1, FLRT2 and FLRT3 (via extracellular domain). Post-translationally, autoproteolytically cleaved into 2 subunits, an extracellular subunit and a seven-transmembrane subunit. This proteolytic processing takes place early in the biosynthetic pathway, either in the endoplasmic reticulum or in the early compartment of the Golgi apparatus.

Its subcellular location is the cell membrane. It localises to the cell projection. The protein localises to the axon. The protein resides in the growth cone. It is found in the synapse. Its subcellular location is the presynaptic cell membrane. It localises to the synaptosome. Calcium-independent receptor of high affinity for alpha-latrotoxin, an excitatory neurotoxin present in black widow spider venom which triggers massive exocytosis from neurons and neuroendocrine cells. Receptor for TENM2 that mediates heterophilic synaptic cell-cell contact and postsynaptic specialization. Receptor probably implicated in the regulation of exocytosis. The sequence is that of Adhesion G protein-coupled receptor L1 from Mus musculus (Mouse).